A 248-amino-acid chain; its full sequence is Ubiquinone/menaquinone biosynthesis C-methyltransferase UbiE (248 aa).

S-adenosyl-L-methionine-binding residues include Ser68 and Asp92.

The protein belongs to the class I-like SAM-binding methyltransferase superfamily. MenG/UbiE family.

The enzyme catalyses a 2-demethylmenaquinol + S-adenosyl-L-methionine = a menaquinol + S-adenosyl-L-homocysteine + H(+). The catalysed reaction is a 2-methoxy-6-(all-trans-polyprenyl)benzene-1,4-diol + S-adenosyl-L-methionine = a 5-methoxy-2-methyl-3-(all-trans-polyprenyl)benzene-1,4-diol + S-adenosyl-L-homocysteine + H(+). Its pathway is quinol/quinone metabolism; menaquinone biosynthesis; menaquinol from 1,4-dihydroxy-2-naphthoate: step 2/2. The protein operates within cofactor biosynthesis; ubiquinone biosynthesis. Functionally, methyltransferase required for the conversion of demethylmenaquinol (DMKH2) to menaquinol (MKH2) and the conversion of 2-polyprenyl-6-methoxy-1,4-benzoquinol (DDMQH2) to 2-polyprenyl-3-methyl-6-methoxy-1,4-benzoquinol (DMQH2). This Rickettsia massiliae (strain Mtu5) protein is Ubiquinone/menaquinone biosynthesis C-methyltransferase UbiE.